Consider the following 184-residue polypeptide: Ribosome-recycling factor (184 aa).

The protein belongs to the RRF family.

Its subcellular location is the cytoplasm. Responsible for the release of ribosomes from messenger RNA at the termination of protein biosynthesis. May increase the efficiency of translation by recycling ribosomes from one round of translation to another. The chain is Ribosome-recycling factor from Staphylococcus carnosus (strain TM300).